Reading from the N-terminus, the 194-residue chain is 7-methyl-GTP pyrophosphatase (194 aa).

Aspartate 69 functions as the Proton acceptor in the catalytic mechanism.

Belongs to the Maf family. YceF subfamily. Requires a divalent metal cation as cofactor.

It localises to the cytoplasm. The enzyme catalyses N(7)-methyl-GTP + H2O = N(7)-methyl-GMP + diphosphate + H(+). In terms of biological role, nucleoside triphosphate pyrophosphatase that hydrolyzes 7-methyl-GTP (m(7)GTP). May have a dual role in cell division arrest and in preventing the incorporation of modified nucleotides into cellular nucleic acids. This is 7-methyl-GTP pyrophosphatase (yceF1) from Salmonella choleraesuis (strain SC-B67).